We begin with the raw amino-acid sequence, 356 residues long: Phosphate acyltransferase (356 aa).

This sequence belongs to the PlsX family. In terms of assembly, homodimer. Probably interacts with PlsY.

The protein localises to the cytoplasm. The enzyme catalyses a fatty acyl-[ACP] + phosphate = an acyl phosphate + holo-[ACP]. The protein operates within lipid metabolism; phospholipid metabolism. In terms of biological role, catalyzes the reversible formation of acyl-phosphate (acyl-PO(4)) from acyl-[acyl-carrier-protein] (acyl-ACP). This enzyme utilizes acyl-ACP as fatty acyl donor, but not acyl-CoA. This is Phosphate acyltransferase from Escherichia coli (strain K12 / DH10B).